The sequence spans 1529 residues: Ras guanine nucleotide exchange factor B (1529 aa).

A coiled-coil region spans residues 135-186; sequence ISNIEKQLSNLVNLKSNTTEQTDRKYKTNLIDFKESIIQLEKDCKNLLKQSN. Disordered stretches follow at residues 290–357, 576–600, 680–724, 847–948, and 1168–1206; these read INTL…ISIN, TTTT…KSSH, KRNT…HIQQ, MGKE…NHNR, and QPPQ…STNL. 3 stretches are compositionally biased toward low complexity: residues 576–591, 683–724, and 853–887; these read TTTT…TTTN, TSSG…HIQQ, and NSNT…NNNE. Coiled coils occupy residues 722 to 798 and 871 to 898; these read IQQI…LNRK and NNNN…ETNK. The segment covering 888–898 has biased composition (basic and acidic residues); it reads NKNENKNETNK. Low complexity-rich tracts occupy residues 906–916, 924–940, 1168–1187, and 1197–1206; these read SSTSTLSSSTT, SSTN…LLPP, QPPQ…TTQP, and QPQLQQSTNL. The N-terminal Ras-GEF domain maps to 1075 to 1205; it reads FYRSIKYASL…PQPQLQQSTN (131 aa). A Ras-GEF domain is found at 1282–1517; the sequence is SSTDIAEQLT…YEQSILLEPK (236 aa).

It is found in the cytoplasm. In terms of biological role, promotes the exchange of Ras-bound GDP by GTP. Involved in phagocytosis, fluid-phase endocytosis, regulation of macropinocytosis and control of cell movement. In Dictyostelium discoideum (Social amoeba), this protein is Ras guanine nucleotide exchange factor B (gefB).